Reading from the N-terminus, the 300-residue chain is MKDLFRRAPKRFTAARIENQAIPDNMWVKCPSCGDLIYTRQFSDNLKVCKCGYHMRLTAREWLGLLDDGSFVEFDAALASVDALGFVSPRHVYEQKLIESRQQTGLNDALITSSGAINGMLLCLAVTEFEFIGGSMGSAYGERLARVIERAADARLPLLTINASGGARQEEGTLALLQMAKVNMALTRLAAAGQPHIALLVDPCYGGVLASYTSVADVIIAEPGARVGFAGRRVIEQTIRQKLPVHFQTAEFLLDHGMIDMVTPRSELRGVLSTLLRLYRDAFAHTSAAQHVPALTHVQG.

The 269-residue stretch at 26 to 294 folds into the CoA carboxyltransferase N-terminal domain; sequence MWVKCPSCGD…HTSAAQHVPA (269 aa). Residues Cys30, Cys33, Cys49, and Cys51 each coordinate Zn(2+). The segment at 30-51 adopts a C4-type zinc-finger fold; the sequence is CPSCGDLIYTRQFSDNLKVCKC.

It belongs to the AccD/PCCB family. Acetyl-CoA carboxylase is a heterohexamer composed of biotin carboxyl carrier protein (AccB), biotin carboxylase (AccC) and two subunits each of ACCase subunit alpha (AccA) and ACCase subunit beta (AccD). Zn(2+) serves as cofactor.

Its subcellular location is the cytoplasm. It catalyses the reaction N(6)-carboxybiotinyl-L-lysyl-[protein] + acetyl-CoA = N(6)-biotinyl-L-lysyl-[protein] + malonyl-CoA. It participates in lipid metabolism; malonyl-CoA biosynthesis; malonyl-CoA from acetyl-CoA: step 1/1. Component of the acetyl coenzyme A carboxylase (ACC) complex. Biotin carboxylase (BC) catalyzes the carboxylation of biotin on its carrier protein (BCCP) and then the CO(2) group is transferred by the transcarboxylase to acetyl-CoA to form malonyl-CoA. This Roseiflexus sp. (strain RS-1) protein is Acetyl-coenzyme A carboxylase carboxyl transferase subunit beta 1.